The sequence spans 273 residues: Oxidized low-density lipoprotein receptor 1 (273 aa).

The tract at residues 1 to 22 is disordered; that stretch reads MTFDDLKIQTVKDQPDEKSNGK. Topologically, residues 1-36 are cytoplasmic; that stretch reads MTFDDLKIQTVKDQPDEKSNGKKAKGLQFLYSPWWC. 2 S-palmitoyl cysteine lipidation sites follow: Cys-36 and Cys-46. A helical; Signal-anchor for type II membrane protein membrane pass occupies residues 37 to 57; that stretch reads LAAATLGVLCLGLVVTIMVLG. A neck region spans residues 58 to 150; that stretch reads MQLSQVSDLL…SAPCPQDWIW (93 aa). At 58–273 the chain is on the extracellular side; sequence MQLSQVSDLL…CQKKANLRAQ (216 aa). Positions 64 to 123 form a coiled coil; it reads SDLLTQEQANLTHQKKKLEGQISARQQAEEASQESENELKEMIETLARKLNEKSKEQMEL. Asn-73 is a glycosylation site (N-linked (GlcNAc...) asparagine). Asn-139 carries N-linked (GlcNAc...) (complex) asparagine glycosylation. 3 disulfide bridges follow: Cys-144–Cys-155, Cys-172–Cys-264, and Cys-243–Cys-256. One can recognise a C-type lectin domain in the interval 151–265; the sequence is HGENCYLFSS…CILAAFSICQ (115 aa).

As to quaternary structure, homodimer; disulfide-linked. May form a hexamer composed of 3 homodimers. Interacts with HSP70. (Microbial infection) Binds to the head and beginning of the coiled stalk of N.meningitidis adhesin A (nadA) variant 3; binding can be abrogated by monoclonal antibodies against the specific regions of NadA. Binding occurs in protein microarrays, in solution and when LOX-1 is expressed on the cell surface. Post-translationally, the intrachain disulfide-bonds prevent N-glycosylation at some sites. In terms of processing, N-glycosylated. As to expression, expressed at high level in endothelial cells and vascular-rich organs such as placenta, lung, liver and brain, aortic intima, bone marrow, spinal cord and substantia nigra. Also expressed at the surface of dendritic cells. Widely expressed at intermediate and low level.

It is found in the cell membrane. The protein resides in the membrane raft. Its subcellular location is the secreted. Receptor that mediates the recognition, internalization and degradation of oxidatively modified low density lipoprotein (oxLDL) by vascular endothelial cells. OxLDL is a marker of atherosclerosis that induces vascular endothelial cell activation and dysfunction, resulting in pro-inflammatory responses, pro-oxidative conditions and apoptosis. Its association with oxLDL induces the activation of NF-kappa-B through an increased production of intracellular reactive oxygen and a variety of pro-atherogenic cellular responses including a reduction of nitric oxide (NO) release, monocyte adhesion and apoptosis. In addition to binding oxLDL, it acts as a receptor for the HSP70 protein involved in antigen cross-presentation to naive T-cells in dendritic cells, thereby participating in cell-mediated antigen cross-presentation. Also involved in inflammatory process, by acting as a leukocyte-adhesion molecule at the vascular interface in endotoxin-induced inflammation. Also acts as a receptor for advanced glycation end (AGE) products, activated platelets, monocytes, apoptotic cells and both Gram-negative and Gram-positive bacteria. In terms of biological role, (Microbial infection) May serve as a receptor for adhesin A variant 3 (nadA) of N.meningitidis. In Homo sapiens (Human), this protein is Oxidized low-density lipoprotein receptor 1 (OLR1).